Reading from the N-terminus, the 217-residue chain is RING-H2 finger protein ATL70 (217 aa).

A helical transmembrane segment spans residues 61–81; it reads IGGFRYGIGVSIGVLLLITTI. The segment at 147-189 adopts an RING-type; atypical zinc-finger fold; the sequence is CAICLGDYKGKHLLRQLPDCNHLFHLKCIDTWLRLNPTCPVCR.

It belongs to the RING-type zinc finger family. ATL subfamily.

It is found in the membrane. The catalysed reaction is S-ubiquitinyl-[E2 ubiquitin-conjugating enzyme]-L-cysteine + [acceptor protein]-L-lysine = [E2 ubiquitin-conjugating enzyme]-L-cysteine + N(6)-ubiquitinyl-[acceptor protein]-L-lysine.. It participates in protein modification; protein ubiquitination. The chain is RING-H2 finger protein ATL70 (ATL70) from Arabidopsis thaliana (Mouse-ear cress).